A 1105-amino-acid chain; its full sequence is Tubulin-folding cofactor D (1105 aa).

N-linked (GlcNAc...) asparagine glycans are attached at residues asparagine 122 and asparagine 126. HEAT repeat units lie at residues 308–345 (IYLE…RLPW), 347–385 (LAEQ…WHGA), 401–446 (SKCL…CYSK), and 452–489 (LQTN…RHAS). Residue asparagine 373 is glycosylated (N-linked (GlcNAc...) asparagine). Asparagine 721, asparagine 883, and asparagine 1083 each carry an N-linked (GlcNAc...) asparagine glycan.

In terms of assembly, interacts with alp21.

It is found in the cytoplasm. It localises to the cytoskeleton. Functionally, has a function in the folding of beta-tubulin. Microtubule-associated protein that is essential to direct polarized cell growth and to position the nucleus and septum to the center of the cell during mitosis. The polypeptide is Tubulin-folding cofactor D (alp1) (Schizosaccharomyces pombe (strain 972 / ATCC 24843) (Fission yeast)).